The sequence spans 353 residues: Rhodopsin (353 aa).

At M1–A36 the chain is on the extracellular side. N-linked (GlcNAc...) asparagine glycosylation is found at N2 and N15. Residues Y37 to V61 traverse the membrane as a helical segment. Over T62–N73 the chain is Cytoplasmic. The chain crosses the membrane as a helical span at residues Y74–Y96. Residues T97–C110 lie on the Extracellular side of the membrane. A disulfide bond links C110 and C187. Residues N111–V133 traverse the membrane as a helical segment. The short motif at E134–W136 is the 'Ionic lock' involved in activated form stabilization element. Topologically, residues E134–H152 are cytoplasmic. Residues A153 to V173 form a helical membrane-spanning segment. The Extracellular portion of the chain corresponds to G174 to S202. The N-linked (GlcNAc...) asparagine glycan is linked to N200. The helical transmembrane segment at F203–G224 threads the bilayer. Residues R225–R252 are Cytoplasmic-facing. Residues M253–Y274 form a helical membrane-spanning segment. The Extracellular portion of the chain corresponds to I275–L286. Residues F287–C308 traverse the membrane as a helical segment. An N6-(retinylidene)lysine modification is found at K296. At M309–A353 the chain is on the cytoplasmic side. S-palmitoyl cysteine attachment occurs at residues C322 and C323. A disordered region spans residues E329–A353. Residues A334–A353 are compositionally biased toward low complexity.

This sequence belongs to the G-protein coupled receptor 1 family. Opsin subfamily. In terms of processing, phosphorylated on some or all of the serine and threonine residues present in the C-terminal region. Contains one covalently linked retinal chromophore.

It localises to the membrane. The protein localises to the cell projection. Its subcellular location is the cilium. The protein resides in the photoreceptor outer segment. In terms of biological role, photoreceptor required for image-forming vision at low light intensity. While most salt water fish species use retinal as chromophore, most freshwater fish use 3-dehydroretinal, or a mixture of retinal and 3-dehydroretinal. Light-induced isomerization of 11-cis to all-trans retinal triggers a conformational change that activates signaling via G-proteins. Subsequent receptor phosphorylation mediates displacement of the bound G-protein alpha subunit by arrestin and terminates signaling. In Chelon auratus (Golden grey mullet), this protein is Rhodopsin (rho).